The primary structure comprises 161 residues: Putative 4-hydroxy-4-methyl-2-oxoglutarate aldolase (161 aa).

Residues 75-78 and arginine 97 each bind substrate; that span reads GDML. Aspartate 98 contributes to the a divalent metal cation binding site.

Belongs to the class II aldolase/RraA-like family. As to quaternary structure, homotrimer. Requires a divalent metal cation as cofactor.

The catalysed reaction is 4-hydroxy-4-methyl-2-oxoglutarate = 2 pyruvate. It carries out the reaction oxaloacetate + H(+) = pyruvate + CO2. Functionally, catalyzes the aldol cleavage of 4-hydroxy-4-methyl-2-oxoglutarate (HMG) into 2 molecules of pyruvate. Also contains a secondary oxaloacetate (OAA) decarboxylase activity due to the common pyruvate enolate transition state formed following C-C bond cleavage in the retro-aldol and decarboxylation reactions. In Marinomonas sp. (strain MWYL1), this protein is Putative 4-hydroxy-4-methyl-2-oxoglutarate aldolase.